The sequence spans 349 residues: DNA polymerase IV (349 aa).

In terms of domain architecture, UmuC spans 7 to 188 (IIHIDMDYFF…LPVKKLFGVG (182 aa)). Positions 11 and 106 each coordinate Mg(2+). E107 is an active-site residue.

The protein belongs to the DNA polymerase type-Y family. Monomer. The cofactor is Mg(2+).

Its subcellular location is the cytoplasm. It catalyses the reaction DNA(n) + a 2'-deoxyribonucleoside 5'-triphosphate = DNA(n+1) + diphosphate. Its function is as follows. Poorly processive, error-prone DNA polymerase involved in untargeted mutagenesis. Copies undamaged DNA at stalled replication forks, which arise in vivo from mismatched or misaligned primer ends. These misaligned primers can be extended by PolIV. Exhibits no 3'-5' exonuclease (proofreading) activity. May be involved in translesional synthesis, in conjunction with the beta clamp from PolIII. The polypeptide is DNA polymerase IV (Francisella tularensis subsp. novicida (strain U112)).